We begin with the raw amino-acid sequence, 159 residues long: ATP synthase subunit b (159 aa).

Residues T7–F27 traverse the membrane as a helical segment.

It belongs to the ATPase B chain family. F-type ATPases have 2 components, F(1) - the catalytic core - and F(0) - the membrane proton channel. F(1) has five subunits: alpha(3), beta(3), gamma(1), delta(1), epsilon(1). F(0) has three main subunits: a(1), b(2) and c(10-14). The alpha and beta chains form an alternating ring which encloses part of the gamma chain. F(1) is attached to F(0) by a central stalk formed by the gamma and epsilon chains, while a peripheral stalk is formed by the delta and b chains.

The protein resides in the cell membrane. Functionally, f(1)F(0) ATP synthase produces ATP from ADP in the presence of a proton or sodium gradient. F-type ATPases consist of two structural domains, F(1) containing the extramembraneous catalytic core and F(0) containing the membrane proton channel, linked together by a central stalk and a peripheral stalk. During catalysis, ATP synthesis in the catalytic domain of F(1) is coupled via a rotary mechanism of the central stalk subunits to proton translocation. In terms of biological role, component of the F(0) channel, it forms part of the peripheral stalk, linking F(1) to F(0). In Clostridium novyi (strain NT), this protein is ATP synthase subunit b.